The following is a 777-amino-acid chain: Aminopeptidase P (777 aa).

The N-terminal stretch at 1–17 (MQLNFLLFVFIFLMVFH) is a signal peptide. Histidine 551 contributes to the substrate binding site. Mn(2+) is bound by residues aspartate 570 and aspartate 581. Position 640 (histidine 640) interacts with substrate. Histidine 644 serves as a coordination point for Mn(2+). Histidine 653 contacts substrate. Positions 676 and 690 each coordinate Mn(2+).

The protein belongs to the peptidase M24B family. Homodimer. Requires Mn(2+) as cofactor. In terms of processing, the N-terminus may be proteolytically cleaved to generate a 73-kDa mature form.

The protein resides in the vacuole lumen. Its subcellular location is the cytoplasm. It carries out the reaction Release of any N-terminal amino acid, including proline, that is linked to proline, even from a dipeptide or tripeptide.. With respect to regulation, partially activated by Co(2+) and Mg(2+) has no effect. Inhibited by 1 mM Zn(2+), Ni(2+), or Cu(2+). Inhibited by apstatin, a non-hydrolysable peptide analog. In terms of biological role, catalyzes the removal of a penultimate prolyl residue from the N-termini of peptides. In the food vacuole, involved in the final step of host hemoglobin catabolism, by cleaving hemoglobin-derived oligopeptides. In the cytoplasm, may be involved in the last steps of the turnover of ubiquitinated proteins. This Plasmodium falciparum (isolate 3D7) protein is Aminopeptidase P.